Reading from the N-terminus, the 48-residue chain is Small polypeptide DEVIL 22 (48 aa).

Residues 7 to 23 (KLNKGHAFTSKCASLVK) traverse the membrane as a helical segment. Residues 13–44 (AFTSKCASLVKEQRARLYILRRCATMLCCWYI) form a required for DVL/RTFL small polypeptide activity region.

It belongs to the DVL/RTFL small polypeptides family.

The protein localises to the cell membrane. Functionally, small polypeptide acting as a regulatory molecule which coordinates cellular responses required for differentiation, growth and development, probably by restricting polar cell proliferation in lateral organs and coordinating socket cell recruitment and differentiation at trichome sites. This chain is Small polypeptide DEVIL 22, found in Arabidopsis thaliana (Mouse-ear cress).